The following is a 74-amino-acid chain: uncharacterized protein (74 aa).

This is an uncharacterized protein from Dictyostelium discoideum (Social amoeba).